A 1158-amino-acid chain; its full sequence is Teashirt homolog 1 (1158 aa).

Disordered regions lie at residues 70 to 126 (DDGR…DMDT), 170 to 228 (INST…ANNG), and 310 to 341 (TGHY…EMEG). Over residues 76-88 (LSYQNSPLSNGTN) the composition is skewed to polar residues. 2 stretches are compositionally biased toward low complexity: residues 186–205 (SHAS…ASAS) and 213–228 (SSNS…ANNG). 2 C2H2-type zinc fingers span residues 288–312 (FRCK…ETGH) and 349–373 (LKCM…KTKH). The segment covering 310 to 326 (TGHYRDDNKDKEEDRGK) has biased composition (basic and acidic residues). Positions 405-425 (PCSPDSISSTPGIPLAETAPT) are disordered. The C2H2-type 3 zinc-finger motif lies at 461–485 (LKCMECGSSHDTLQQLTAHMMVTGH). Disordered regions lie at residues 516 to 573 (PPTT…VEKS), 656 to 681 (LKSL…NHKS), and 693 to 748 (VTGK…VDKD). Over residues 555–573 (EEKKIKQEKEDPSERVEKS) the composition is skewed to basic and acidic residues. A compositionally biased stretch (low complexity) spans 656–671 (LKSLTSDSSTLIHSPS). 2 stretches are compositionally biased toward basic and acidic residues: residues 693 to 716 (VTGK…KHLT) and 724 to 748 (LKER…VDKD). The homeobox DNA-binding region spans 963-1033 (RKGRQSNWNP…NVKYQLRRTG (71 aa)). 2 consecutive C2H2-type zinc fingers follow at residues 1048–1070 (FLCS…LESH) and 1115–1138 (FQCK…SKTH).

It belongs to the teashirt C2H2-type zinc-finger protein family.

It localises to the nucleus. In terms of biological role, probable transcriptional regulator involved in developmental processes. May act as a transcriptional repressor (Potential). This Danio rerio (Zebrafish) protein is Teashirt homolog 1 (tshz1).